Here is a 281-residue protein sequence, read N- to C-terminus: Pantothenate synthetase (281 aa).

30–37 (MGYLHEGH) contributes to the ATP binding site. The active-site Proton donor is His37. A (R)-pantoate-binding site is contributed by Gln61. Gln61 contacts beta-alanine. 147-150 (GEKD) contributes to the ATP binding site. Residue Gln153 coordinates (R)-pantoate. Residues Ile176 and 184-187 (KSSR) each bind ATP.

Belongs to the pantothenate synthetase family. As to quaternary structure, homodimer.

It localises to the cytoplasm. The catalysed reaction is (R)-pantoate + beta-alanine + ATP = (R)-pantothenate + AMP + diphosphate + H(+). It participates in cofactor biosynthesis; (R)-pantothenate biosynthesis; (R)-pantothenate from (R)-pantoate and beta-alanine: step 1/1. Catalyzes the condensation of pantoate with beta-alanine in an ATP-dependent reaction via a pantoyl-adenylate intermediate. The sequence is that of Pantothenate synthetase from Clostridium botulinum (strain Kyoto / Type A2).